A 197-amino-acid polypeptide reads, in one-letter code: Nucleoid occlusion factor SlmA (197 aa).

An HTH tetR-type domain is found at 7–67 (ISRREHILQC…GLIEFIEDSL (61 aa)). Residues 30-49 (TTAKLAAEVGVSEAALYRHF) constitute a DNA-binding region (H-T-H motif).

It belongs to the nucleoid occlusion factor SlmA family. In terms of assembly, homodimer. Interacts with FtsZ.

Its subcellular location is the cytoplasm. The protein localises to the nucleoid. Functionally, required for nucleoid occlusion (NO) phenomenon, which prevents Z-ring formation and cell division over the nucleoid. Acts as a DNA-associated cell division inhibitor that binds simultaneously chromosomal DNA and FtsZ, and disrupts the assembly of FtsZ polymers. SlmA-DNA-binding sequences (SBS) are dispersed on non-Ter regions of the chromosome, preventing FtsZ polymerization at these regions. The polypeptide is Nucleoid occlusion factor SlmA (Shewanella amazonensis (strain ATCC BAA-1098 / SB2B)).